The following is a 390-amino-acid chain: uncharacterized protein (390 aa).

This is an uncharacterized protein from Acanthamoeba polyphaga (Amoeba).